The primary structure comprises 275 residues: DNA polymerase II subunit B4 (275 aa).

A DNA-binding region spans residues 11-17 (LPLAIVR). Positions 112-122 (ASYPAGGAALK) are enriched in low complexity. The disordered stretch occupies residues 112–275 (ASYPAGGAAL…EEVESDEEDE (164 aa)). A Nuclear localization signal motif is present at residues 135-142 (KKRKQEEP). Basic and acidic residues predominate over residues 151 to 161 (SKIDEETKRND). Residues 152–179 (KIDEETKRNDEETENDNTEEENGNDEED) adopt a coiled-coil conformation. Acidic residues-rich tracts occupy residues 162 to 237 (EETE…EESG) and 266 to 275 (EEVESDEEDE).

Belongs to the NFYB/HAP3 subunit family. As to quaternary structure, heterotrimeric transcription factor composed of three components, NF-YA, NF-YB and NF-YC. NF-YB and NF-YC must interact and dimerize for NF-YA association and DNA binding. Binds directly with DPB3-1.

The protein resides in the nucleus. In terms of biological role, component of the NF-Y/HAP transcription factor complex. The NF-Y complex stimulates the transcription of various genes by recognizing and binding to a CCAAT motif in promoters. The protein is DNA polymerase II subunit B4 of Arabidopsis thaliana (Mouse-ear cress).